The primary structure comprises 349 residues: tRNA pseudouridine synthase D (349 aa).

Phe-27 is a binding site for substrate. The active-site Nucleophile is Asp-80. A substrate-binding site is contributed by Asn-129. Residues 155–303 form the TRUD domain; sequence GVPNYFGAQR…VEAARRAMLL (149 aa). Phe-329 serves as a coordination point for substrate.

Belongs to the pseudouridine synthase TruD family.

It carries out the reaction uridine(13) in tRNA = pseudouridine(13) in tRNA. Responsible for synthesis of pseudouridine from uracil-13 in transfer RNAs. This Escherichia coli O7:K1 (strain IAI39 / ExPEC) protein is tRNA pseudouridine synthase D.